A 431-amino-acid polypeptide reads, in one-letter code: Cyclin-B2-4 (431 aa).

The interval 1 to 30 (MGGSDENRHGVIGPMNRQQGGLRGGKVIPT) is disordered.

It belongs to the cyclin family. Cyclin AB subfamily. In terms of assembly, interacts with SMR11.

The protein is Cyclin-B2-4 (CYCB2-4) of Arabidopsis thaliana (Mouse-ear cress).